The chain runs to 260 residues: UPF0758 protein Smed_1459 (260 aa).

In terms of domain architecture, MPN spans 138 to 260; it reads VLSSWSAVID…HVSLKGLQLF (123 aa). Residues His-209, His-211, and Asp-222 each coordinate Zn(2+). The JAMM motif signature appears at 209-222; it reads HNHPSGDPTPSCAD.

It belongs to the UPF0758 family.

The sequence is that of UPF0758 protein Smed_1459 from Sinorhizobium medicae (strain WSM419) (Ensifer medicae).